A 452-amino-acid chain; its full sequence is Caspase-2 (452 aa).

At Ala-2 the chain carries N-acetylalanine. Residues 2–169 (AAPSAGSWST…TVEHSLDNKD (168 aa)) constitute a propeptide that is removed on maturation. A CARD domain is found at 32 to 121 (MHPHHQETLK…GHLEDMLLTT (90 aa)). Ser-157 carries the phosphoserine modification. Active-site residues include His-277 and Cys-320. A propeptide spanning residues 326 to 333 (DRGVDQQD) is cleaved from the precursor. Over residues 327 to 336 (RGVDQQDGKN) the composition is skewed to basic and acidic residues. The disordered stretch occupies residues 327-354 (RGVDQQDGKNHAGSPGCEESDAGKEKLP). Ser-340 carries the phosphoserine modification.

The protein belongs to the peptidase C14A family. As to quaternary structure, heterotetramer that consists of two anti-parallel arranged heterodimers, each one formed by a p18 subunit and a p12 subunit. Forms a complex named the PIDDosome with PIDD1 and CRADD. Interacts with NOL3 (via CARD domain); inhibits CASP2 activity in a phosphorylation-dependent manner. The mature protease can process its own propeptide, but not that of other caspases. Expressed at higher levels in the embryonic lung, liver and kidney than in the heart and brain. In adults, higher level expression is seen in the placenta, lung, kidney, and pancreas than in the heart, brain, liver and skeletal muscle.

It carries out the reaction Strict requirement for an Asp residue at P1, with 316-Asp being essential for proteolytic activity and has a preferred cleavage sequence of Val-Asp-Val-Ala-Asp-|-.. Is a regulator of the cascade of caspases responsible for apoptosis execution. Might function by either activating some proteins required for cell death or inactivating proteins necessary for cell survival. Associates with PIDD1 and CRADD to form the PIDDosome, a complex that activates CASP2 and triggers apoptosis in response to genotoxic stress. Functionally, acts as a positive regulator of apoptosis. Its function is as follows. Acts as a negative regulator of apoptosis. In terms of biological role, may function as an endogenous apoptosis inhibitor that antagonizes caspase activation and cell death. This Homo sapiens (Human) protein is Caspase-2 (CASP2).